The primary structure comprises 535 residues: Nuclear/nucleolar GTPase 2 (535 aa).

The tract at residues 1–42 (MAKKKERAVNVSGKPRHSLDVNRANDKKGAGGGAGGGGGGRS) is disordered. Residues 17–29 (HSLDVNRANDKKG) are compositionally biased toward basic and acidic residues. Gly residues predominate over residues 30–41 (AGGGAGGGGGGR). The 162-residue stretch at 213–374 (WGELYKVIDS…LIDCPGVVYQ (162 aa)) folds into the CP-type G domain. Positions 261–264 (NKCD) are G4. The tract at residues 290-292 (SIN) is G5. Residues 323–330 (GYPNVGKS) form a G1 region. The interval 349-353 (GETKV) is G2. The G3 stretch occupies residues 367–370 (DCPG). Residues 464-495 (FFVPPPQQGEDSPSETAEPVDKSDEEGVSSDR) form a disordered region.

This sequence belongs to the TRAFAC class YlqF/YawG GTPase family. RsgA subfamily.

The protein localises to the nucleus. It is found in the nucleolus. Functionally, GTPase involved in pre-60S ribosomal subunit maturation. This Oryza sativa subsp. indica (Rice) protein is Nuclear/nucleolar GTPase 2.